We begin with the raw amino-acid sequence, 252 residues long: Flagellar brake protein YcgR (252 aa).

One can recognise a PilZ domain in the interval 118–236 (QRREYFRVSI…EKGLQRAIFE (119 aa)).

Belongs to the YcgR family. In terms of assembly, monomer. Interacts with the flagellar basal bodies.

It is found in the bacterial flagellum basal body. Acts as a flagellar brake, regulating swimming and swarming in a bis-(3'-5') cyclic diguanylic acid (c-di-GMP)-dependent manner. Binds 1 c-di-GMP dimer per subunit. Increasing levels of c-di-GMP lead to decreased motility. The polypeptide is Flagellar brake protein YcgR (Yersinia pseudotuberculosis serotype I (strain IP32953)).